Consider the following 201-residue polypeptide: Recombination protein RecR (201 aa).

Residues 57 to 72 (CADCRTFTEQDVCNIC) form a C4-type zinc finger. The 96-residue stretch at 81–176 (GQICVVESPA…EASRIAHGVP (96 aa)) folds into the Toprim domain.

This sequence belongs to the RecR family.

Functionally, may play a role in DNA repair. It seems to be involved in an RecBC-independent recombinational process of DNA repair. It may act with RecF and RecO. The chain is Recombination protein RecR from Salmonella agona (strain SL483).